We begin with the raw amino-acid sequence, 620 residues long: MSFDIAKYPTLALVDSTQELRLLPKESLPKLCDELRRYLLDSVSRSSGHFASGLGTVELTVALHYVYNTPFDQLIWDVGHQAYPHKILTGRRDKIGTIRQKGGLHPFPWRGESEYDVLSVGHSSTSISAGIGIAVAAEKEGKDRRTVCVIGDGAITAGMAFEAMNHAGDIRPDMLVILNDNEMSISENVGALNNHLAQLLSGKLYSSLREGGKKVFSGVPPIKELLKRTEEHIKGMVVPGTLFEELGFNYIGPVDGHDVMGLISTLKNMRDLKGPQFLHIMTKKGRGYEPAEKDPITFHAVPKFDPSSGCLPKSSGGLPGYSKIFGDWLCETAAKDSKLMAITPAMREGSGMVEFSRKFPDRYFDVAIAEQHAVTFAAGLAIGGYKPVVAIYSTFLQRAYDQVIHDVAIQKLPVMFAIDRAGIVGADGQTHQGAFDLSYLRCIPDMVIMTPSDENECRQMLFTGYHYNDGPTAVRYPRGNAQGVALTPLEKLPIGKGLVKRHGEKLAILNFGTLMPEAAKVAEALNATLVDMRFVKPLDDTLILEMAAQHDALVTLEENAIMGGAGSGVNEVLMAHRKPVPVLNIGLPDFFIPQGTQEEARAELGLDAAGIEAKIKAWLA.

Thiamine diphosphate contacts are provided by residues histidine 80 and 121–123; that span reads GHS. Aspartate 152 serves as a coordination point for Mg(2+). Thiamine diphosphate-binding positions include 153–154, asparagine 181, tyrosine 288, and glutamate 370; that span reads GA. Asparagine 181 serves as a coordination point for Mg(2+).

The protein belongs to the transketolase family. DXPS subfamily. Homodimer. Mg(2+) serves as cofactor. It depends on thiamine diphosphate as a cofactor.

It catalyses the reaction D-glyceraldehyde 3-phosphate + pyruvate + H(+) = 1-deoxy-D-xylulose 5-phosphate + CO2. It participates in metabolic intermediate biosynthesis; 1-deoxy-D-xylulose 5-phosphate biosynthesis; 1-deoxy-D-xylulose 5-phosphate from D-glyceraldehyde 3-phosphate and pyruvate: step 1/1. Catalyzes the acyloin condensation reaction between C atoms 2 and 3 of pyruvate and glyceraldehyde 3-phosphate to yield 1-deoxy-D-xylulose-5-phosphate (DXP). The protein is 1-deoxy-D-xylulose-5-phosphate synthase of Salmonella choleraesuis (strain SC-B67).